The chain runs to 196 residues: DnaA initiator-associating protein DiaA (196 aa).

Residues 34–196 (LVQSLLNGNK…DNTLFPHQDD (163 aa)) enclose the SIS domain.

This sequence belongs to the SIS family. DiaA subfamily. As to quaternary structure, homotetramer; dimer of dimers.

Its function is as follows. Required for the timely initiation of chromosomal replication via direct interactions with the DnaA initiator protein. This chain is DnaA initiator-associating protein DiaA, found in Enterobacter sp. (strain 638).